A 293-amino-acid polypeptide reads, in one-letter code: Bifunctional monothiol glutaredoxin-S16, chloroplastic (293 aa).

Residues 1 to 62 (MAAITISSSL…APSRRRSFFI (62 aa)) constitute a chloroplast transit peptide. An intrachain disulfide couples cysteine 123 to cysteine 219. The region spanning 194 to 293 (EELIDRLVKE…ENGELANILN (100 aa)) is the Glutaredoxin domain. Lysine 211 provides a ligand contact to glutathione. A [2Fe-2S] cluster-binding site is contributed by cysteine 219. Glutathione-binding positions include arginine 251, phenylalanine 263, and 276-277 (CD).

The protein belongs to the glutaredoxin family. CGFS subfamily. [2Fe-2S]-bridged holo-homodimer. Interacts in vitro with SUFE1, BOLA1, BOLA2 and BOLA4. Interacts in vivo only with SUFE1, BOLA1 and BOLA4. Interacts with SBP1.

The protein localises to the plastid. The protein resides in the chloroplast. With respect to regulation, the formation of an intramolecular disulfide bond negatively regulates both the N-terminal endonuclease and the C-terminal glutaredoxin activities. Its function is as follows. May only reduce GSH-thiol disulfides, but not protein disulfides. Participates probably to the maturation of iron-sulfur proteins and to the regulation of the redox state of the BOLA proteins. The GRXS16-BOLA1 heterodimer binds a labile, oxygen sensitive iron-sulfur cluster. Able to cleave linearized DNA in vitro. In Arabidopsis thaliana (Mouse-ear cress), this protein is Bifunctional monothiol glutaredoxin-S16, chloroplastic.